The chain runs to 719 residues: BRCA1-A complex subunit RAP80 (719 aa).

Residues 1–30 are disordered; the sequence is MPRRKKKVKEVSESRNLEKKDVETTSSVSV. The interval 1–101 is necessary for transcriptional repression; that stretch reads MPRRKKKVKE…SEQEAREVNS (101 aa). Residues 9 to 23 are compositionally biased toward basic and acidic residues; sequence KEVSESRNLEKKDVE. A Glycyl lysine isopeptide (Lys-Gly) (interchain with G-Cter in SUMO2) cross-link involves residue Lys20. Phosphoserine is present on Ser29. Lys31 participates in a covalent cross-link: Glycyl lysine isopeptide (Lys-Gly) (interchain with G-Cter in SUMO2). Residues 43 to 68 are disordered; the sequence is ISDSDGEEPKEENGLQKTKTKQSNRA. Residues Ser44 and Ser46 each carry the phosphoserine modification. An LR motif motif is present at residues 60-78; it reads TKTKQSNRAKCLAKRKIAQ. Glycyl lysine isopeptide (Lys-Gly) (interchain with G-Cter in SUMO2) cross-links involve residues Lys75 and Lys90. A UIM 1 domain is found at 80–99; it reads TEEEQFALALKMSEQEAREV. 2 disordered regions span residues 93–152 and 164–205; these read EQEA…DSGL and LFKG…DQSS. Residues 97–103 are UIM-linker; sequence REVNSQE. The interval 100-200 is necessary for interaction with NR6A1 N-terminus; sequence NSQEEEEEEL…EEPVSGSSGS (101 aa). A Phosphoserine modification is found at Ser101. The UIM 2 domain maps to 105–124; the sequence is EEEELLRKAIAESLNSCRPS. Polar residues predominate over residues 117 to 130; it reads SLNSCRPSDASATR. Phosphoserine is present on Ser140. Lys188 is covalently cross-linked (Glycyl lysine isopeptide (Lys-Gly) (interchain with G-Cter in SUMO2)). Residues 195–205 are compositionally biased toward low complexity; it reads SGSSGSWDQSS. Ser205 carries the post-translational modification Phosphoserine. Lys245 is covalently cross-linked (Glycyl lysine isopeptide (Lys-Gly) (interchain with G-Cter in SUMO2)). Positions 270–400 are AIR; it reads TGGTVNYFWG…EEEPTTSHGQ (131 aa). The interval 320–378 is disordered; that stretch reads FGEPVLPRPPSLIQNECGQGEQASEKNECISEDMGDEDKEERQESRASDWHSKTKDFQE. Residues 349–358 show a composition bias toward acidic residues; it reads ISEDMGDEDK. A compositionally biased stretch (basic and acidic residues) spans 359–378; that stretch reads EERQESRASDWHSKTKDFQE. Ser379 is subject to Phosphoserine. Glycyl lysine isopeptide (Lys-Gly) (interchain with G-Cter in SUMO2) cross-links involve residues Lys382 and Lys387. The disordered stretch occupies residues 391–422; sequence EEEPTTSHGQSSQGIVEETSEEGNSVPASQSV. Residues 400-500 are necessary for interaction with NR6A1 C-terminus; the sequence is QSSQGIVEET…EVAISTFSSS (101 aa). 2 positions are modified to phosphoserine: Ser402 and Ser419. Over residues 412-422 the composition is skewed to polar residues; the sequence is EGNSVPASQSV. Lys428 is covalently cross-linked (Glycyl lysine isopeptide (Lys-Gly) (interchain with G-Cter in SUMO2)). Ser466 is modified (phosphoserine). A UBZ4-type zinc finger spans residues 502–529; the sequence is QVSCPLCDQCFPPTKIERHAMYCNGLME. Cys505, Cys508, His520, and Cys524 together coordinate Zn(2+). The zinc-finger-like region stretch occupies residues 505–582; the sequence is CPLCDQCFPP…REYQCHVDSC (78 aa). Glycyl lysine isopeptide (Lys-Gly) (interchain with G-Cter in SUMO2) cross-links involve residues Lys544, Lys559, Lys562, Lys587, and Lys607. Residues 588–668 are disordered; the sequence is ADQGDGPEGS…AGCSREMQSS (81 aa). Positions 614-623 are enriched in basic and acidic residues; that stretch reads NPKEKGHSEG. Residue Ser627 is modified to Phosphoserine. Positions 631 to 643 are enriched in basic and acidic residues; the sequence is QSEHKTSDADIKS. Residues Lys635 and Lys642 each participate in a glycyl lysine isopeptide (Lys-Gly) (interchain with G-Cter in SUMO2) cross-link. Phosphoserine occurs at positions 653 and 677. Residues Lys696 and Lys697 each participate in a glycyl lysine isopeptide (Lys-Gly) (interchain with G-Cter in SUMO2) cross-link.

It belongs to the RAP80 family. In terms of assembly, component of the ARISC complex, at least composed of UIMC1/RAP80, ABRAXAS1, BRCC3/BRCC36, BABAM2 and BABAM1/NBA1. Component of the BRCA1-A complex, at least composed of the BRCA1, BARD1, UIMC1/RAP80, ABRAXAS1, BRCC3/BRCC36, BABAM2 and BABAM1/NBA1. In the BRCA1-A complex, interacts directly with ABRAXAS1. Interacts with UBE2I. Interacts with NR6A1. Interacts with ESR1. Interacts with TSP57. Interacts with TRAIP. In terms of processing, sumoylated. Post-translationally, phosphorylated upon DNA damage by ATM or ATR. In terms of tissue distribution, expressed in testis, ovary, thymus and heart. Expressed in germ cells of the testis.

It is found in the nucleus. Ubiquitin-binding protein. Specifically recognizes and binds 'Lys-63'-linked ubiquitin. Plays a central role in the BRCA1-A complex by specifically binding 'Lys-63'-linked ubiquitinated histones H2A and H2AX at DNA lesions sites, leading to target the BRCA1-BARD1 heterodimer to sites of DNA damage at double-strand breaks (DSBs). The BRCA1-A complex also possesses deubiquitinase activity that specifically removes 'Lys-63'-linked ubiquitin on histones H2A and H2AX. Also weakly binds monoubiquitin but with much less affinity than 'Lys-63'-linked ubiquitin. May interact with monoubiquitinated histones H2A and H2B; the relevance of such results is however unclear in vivo. Does not bind Lys-48'-linked ubiquitin. May indirectly act as a transcriptional repressor by inhibiting the interaction of NR6A1 with the corepressor NCOR1. The sequence is that of BRCA1-A complex subunit RAP80 (UIMC1) from Homo sapiens (Human).